A 414-amino-acid polypeptide reads, in one-letter code: Methyl-CpG-binding domain protein 2 (414 aa).

The interval 1 to 152 is required for interaction with DHX9 and PRMT5; the sequence is MRAHPGGGRC…GPRATESGKR (152 aa). The interval 1–163 is disordered; the sequence is MRAHPGGGRC…DCPALPPGWK (163 aa). Over residues 77–95 the composition is skewed to basic residues; that stretch reads GRGRGRGRGRGRGRGRGRG. A compositionally biased stretch (gly residues) spans 98 to 123; sequence QSGGSGLGGDGGGGAGGCGGGSGGGV. Residues 148–216 form the MBD domain; that stretch reads ESGKRMDCPA…SSFDFRTGKM (69 aa). Ser184 bears the Phosphoserine mark. Positions 217-244 are disordered; that stretch reads MPSKLQKNKQRLRNDPLNQNKGKPDLNT. The segment covering 232–244 has biased composition (polar residues); the sequence is PLNQNKGKPDLNT. Residue Ser410 is modified to Phosphoserine.

Heterodimer with MBD3 (via N-terminus). Component of the MeCP1 complex that contains HDAC1 and HDAC2. Component of the nucleosome remodeling and deacetylase (NuRD) repressor complex, composed of core proteins MTA1, MTA2, MTA3, RBBP4, RBBP7, HDAC1, HDAC2, MBD2, MBD3, and peripherally associated proteins CDK2AP1, CDK2AP2, GATAD2A, GATAD2B, CHD3, CHD4 and CHD5. The exact stoichiometry of the NuRD complex is unknown, and some subunits such as MBD2 and MBD3, GATAD2A and GATAD2B, and CHD3, CHD4 and CHD5 define mutually exclusive NuRD complexes. Interacts with CDK2AP1. Interacts with DHX9. Interacts with DNMT1. Interacts with GATAD2A/p66-alpha. Interacts with GATAD2B/p66-beta. Interacts with GPN1. Interacts with MIZF. Interacts with PRMT5. Interacts with SIN3A. Interacts with SPHK2. In terms of tissue distribution, highly expressed in brain, heart, kidney, lung, skeletal muscle, spleen and testis. Detected at lower levels in embryonic stem cells.

It is found in the nucleus. It localises to the chromosome. Binds CpG islands in promoters where the DNA is methylated at position 5 of cytosine within CpG dinucleotides. Binds hemimethylated DNA as well. Recruits histone deacetylases and DNA methyltransferases to chromatin. Acts as a component of the histone deacetylase NuRD complex which participates in the remodeling of chromatin. Acts as transcriptional repressor and plays a role in gene silencing. Functions as a scaffold protein, targeting GATAD2A and GATAD2B to chromatin to promote repression. May enhance the activation of some unmethylated cAMP-responsive promoters. Selectively represses transcription activity of methylated rRNA promoters. This chain is Methyl-CpG-binding domain protein 2, found in Mus musculus (Mouse).